The primary structure comprises 1021 residues: MSSTKTPISLTIKLNQFTDKPTGLDINRYHNSPIMWRNIIKQLSSRTPQKLLFSSKNRTYSFLGFGQDSVFKDNTKFRSLIPISCSNIVMGFQNLGEYLPGDEFLSRPLLKNQVNSNDFCCRKSYASVAEAVAVSSTDAEEDVSVVDEVQELLTELKKEEKKQFAFRRRKQRMLTSGMGHRKYQTLKRRQVKVETEAWEQAAKEYKELLFDMCEQKLAPNLPYVKSLFLGWFEPLRDKIAEEQELCSQGKSKAAYAKYLYQLPADMMAVITMHKLMGLLMTGGDHGTARVVQAALVIGDAIEQEVRIHNFLEKTKKQKAEKDKQKEDGEHVTQEQEKLRKKVTNLMKKQKLRAVGQIVRRQDDSKPWGQDAKAKVGSRLIELLLQTAYIQPPANQLAVDPPDIRPAFLHSVRTVAKETKSASRRYGIIQCDELVFKGLERTARHMVIPYMPMLVPPVKWTGYDKGGHLYLPSYVMRTHGARQQREAVKRASRNQLQPVFEALDTLGSTKWRINKRVLSVIDRIWAGGGRLADLVDRDDAPLPEEPDTEDEALRTKWRWKVKSVKKENRERHSQRCDIELKLAVARKMKDEEGFFYPHNVDFRGRAYPMHPHLNHLGSDICRGVLVFAEGRPLGESGLRWLKIHLANLFAGGVEKLSLEGRIAFTENHMDDIFDSADKPLEGRRWWLNAEDPFQCLAVCINLSEAVRSSSPETSISHIPVHQDGSCNGLQHYAALGRDELGAAAVNLVAGEKPADVYSGIAARVLDIMKRDAQRDPAEFPDAVRARALVNQVDRKLVKQTVMTSVYGVTYIGARDQIKRRLKERGAIADDSELFGAACYAAKVTLTALGEMFEAARSIMTWLGECAKIIASENEPVRWTTPLGLPVVQPYRKIGRHLIKTSLQILTLQQETEKVMVKRQRTAFPPNFIHSLDGSHMMMTAVACRRAGLNFAGVHDSYWTHACDVDKLNRILREKFVELYETPILEKLLESFQTSYPTLLFPPLPERGDFDLRDVLESPYFFN.

The disordered stretch occupies residues 315-337 (KKQKAEKDKQKEDGEHVTQEQEK). Residues aspartate 722, lysine 797, and aspartate 954 contribute to the active site.

It belongs to the phage and mitochondrial RNA polymerase family.

The protein resides in the plastid. It localises to the chloroplast. Its subcellular location is the mitochondrion. It catalyses the reaction RNA(n) + a ribonucleoside 5'-triphosphate = RNA(n+1) + diphosphate. Functionally, DNA-dependent RNA polymerase catalyzes the transcription of DNA into RNA using the four ribonucleoside triphosphates as substrates. The chain is DNA-directed RNA polymerase 2B, chloroplastic/mitochondrial (RPOT2-TOM) from Nicotiana tabacum (Common tobacco).